The following is a 554-amino-acid chain: Urocanate hydratase (554 aa).

Residues 49 to 50, Gln127, 173 to 175, Glu193, Arg198, 239 to 240, 260 to 264, 270 to 271, and Tyr319 each bind NAD(+); these read GG, GMG, NA, QTSAH, and YI. Cys407 is a catalytic residue. An NAD(+)-binding site is contributed by Gly489.

This sequence belongs to the urocanase family. NAD(+) serves as cofactor.

It is found in the cytoplasm. The catalysed reaction is 4-imidazolone-5-propanoate = trans-urocanate + H2O. The protein operates within amino-acid degradation; L-histidine degradation into L-glutamate; N-formimidoyl-L-glutamate from L-histidine: step 2/3. In terms of biological role, catalyzes the conversion of urocanate to 4-imidazolone-5-propionate. The polypeptide is Urocanate hydratase (Bacillus velezensis (strain DSM 23117 / BGSC 10A6 / LMG 26770 / FZB42) (Bacillus amyloliquefaciens subsp. plantarum)).